A 445-amino-acid polypeptide reads, in one-letter code: Anthranilate N-benzoyltransferase protein 1 (445 aa).

Residues His-164 and Asp-392 each act as proton acceptor in the active site.

The protein belongs to the plant acyltransferase family. Post-translationally, N-terminus is blocked.

The catalysed reaction is anthranilate + benzoyl-CoA = N-benzoylanthranilate + CoA. The protein operates within phytoalexin biosynthesis; methoxydianthramide B biosynthesis. Catalyzes the formation of N-benzoylanthranilate, in the course of methoxydianthramide B, a phytoalexin. Phytoalexins are produced in response to infection by parasites, and are essential for the expression of disease resistance. This chain is Anthranilate N-benzoyltransferase protein 1 (HCBT1), found in Dianthus caryophyllus (Carnation).